The chain runs to 342 residues: Methylthioribose-1-phosphate isomerase (342 aa).

Substrate-binding positions include 44–46 (RGA), Arg-87, and Gln-194. The active-site Proton donor is Asp-235. 245–246 (NK) contacts substrate.

It belongs to the eIF-2B alpha/beta/delta subunits family. MtnA subfamily.

It catalyses the reaction 5-(methylsulfanyl)-alpha-D-ribose 1-phosphate = 5-(methylsulfanyl)-D-ribulose 1-phosphate. Its pathway is amino-acid biosynthesis; L-methionine biosynthesis via salvage pathway; L-methionine from S-methyl-5-thio-alpha-D-ribose 1-phosphate: step 1/6. In terms of biological role, catalyzes the interconversion of methylthioribose-1-phosphate (MTR-1-P) into methylthioribulose-1-phosphate (MTRu-1-P). The chain is Methylthioribose-1-phosphate isomerase from Acetivibrio thermocellus (strain ATCC 27405 / DSM 1237 / JCM 9322 / NBRC 103400 / NCIMB 10682 / NRRL B-4536 / VPI 7372) (Clostridium thermocellum).